The following is a 95-amino-acid chain: MKDPRDIIKRPIITENTMNLVGQRKYTFEVDVKANKTEVKDAVEKIFGVKVEKVNIMNYKGKFKRVGRYSGYTNRRRKAIVTLTPDSKEIELFEV.

Belongs to the universal ribosomal protein uL23 family. In terms of assembly, part of the 50S ribosomal subunit. Contacts protein L29, and trigger factor when it is bound to the ribosome.

Functionally, one of the early assembly proteins it binds 23S rRNA. One of the proteins that surrounds the polypeptide exit tunnel on the outside of the ribosome. Forms the main docking site for trigger factor binding to the ribosome. The sequence is that of Large ribosomal subunit protein uL23 from Geobacillus thermodenitrificans (strain NG80-2).